The chain runs to 322 residues: Ferrochelatase (322 aa).

Fe cation-binding residues include His193 and Glu274.

The protein belongs to the ferrochelatase family.

The protein localises to the cytoplasm. The catalysed reaction is heme b + 2 H(+) = protoporphyrin IX + Fe(2+). It functions in the pathway porphyrin-containing compound metabolism; protoheme biosynthesis; protoheme from protoporphyrin-IX: step 1/1. Functionally, catalyzes the ferrous insertion into protoporphyrin IX. The protein is Ferrochelatase of Photobacterium profundum (strain SS9).